We begin with the raw amino-acid sequence, 675 residues long: G-protein coupled receptor moody (675 aa).

Over 1–44 (MSDETTGSLGDAFSPMDTPTTTIMPPPADVDESGFSHSLLTFAA) the chain is Extracellular. The chain crosses the membrane as a helical span at residues 45–65 (VMTFLIMIVGICGNLLTVVAL). Topologically, residues 66–73 (LKCPKVRN) are cytoplasmic. Residues 74–94 (VAAAFIISLCIADLLFCALVL) traverse the membrane as a helical segment. Topologically, residues 95-115 (PFQGLRFVQGTWRHGEVLCRL) are extracellular. Cysteine 113 and cysteine 192 are disulfide-bonded. Residues 116–136 (IPFIQYGNIGVSLLCIAMITI) form a helical membrane-spanning segment. Over 137-156 (NRYVMITHYSLYNRIYKRHW) the chain is Cytoplasmic. The helical transmembrane segment at 157–177 (IAIMIAACWLFSYGMQLPTLL) threads the bilayer. The Extracellular portion of the chain corresponds to 178-206 (GAWGRFGYDARLQTCSIMSDRHGHSSKTT). The chain crosses the membrane as a helical span at residues 207 to 227 (LFITAFVIPCLVIIACYAKIF). Topologically, residues 228-327 (WVVHKSEQRL…AKRNEWRITK (100 aa)) are cytoplasmic. A disordered region spans residues 258–316 (TSMPSGDGANPSQVPAGCRVSSDSSSNYSTDVPDTTPGGAGGGAGVKQQPSRVKDQREV). Low complexity predominate over residues 278–294 (SSDSSSNYSTDVPDTTP). The helical transmembrane segment at 328–348 (MVLAIFLSFVICYLPITIVKV) threads the bilayer. Residues 349–359 (ADKDVEHPSLH) lie on the Extracellular side of the membrane. A helical membrane pass occupies residues 360 to 380 (IFSYIMLYLSACINPIIYVIM). Residues 381 to 675 (NKQYRKAYKT…LMDKKKFPKD (295 aa)) are Cytoplasmic-facing. 2 disordered regions span residues 475–568 (SKSS…GNGS) and 588–675 (LPPT…FPKD). A compositionally biased stretch (low complexity) spans 536 to 551 (SSVISANPSSSPSPSS). A compositionally biased stretch (gly residues) spans 552–565 (SGGGIYRPGIGSMG). Over residues 666-675 (LMDKKKFPKD) the composition is skewed to basic and acidic residues.

The protein belongs to the G-protein coupled receptor 1 family.

The protein resides in the cell membrane. Functionally, required in glia to regulate the acute sensitivity to cocaine and to continuously maintain the proper blood-brain barrier (BBB) function. A moody-mediated signaling pathway functions in glia to regulate nervous system insulation and drug-related behaviors. The polypeptide is G-protein coupled receptor moody (Drosophila pseudoobscura pseudoobscura (Fruit fly)).